Reading from the N-terminus, the 111-residue chain is Universal stress protein B (111 aa).

Transmembrane regions (helical) follow at residues Met-1–Arg-21 and Phe-90–Trp-110.

This sequence belongs to the universal stress protein B family.

The protein resides in the cell inner membrane. In Yersinia enterocolitica serotype O:8 / biotype 1B (strain NCTC 13174 / 8081), this protein is Universal stress protein B.